A 210-amino-acid chain; its full sequence is A-kinase-interacting protein 1 (210 aa).

2 disordered regions span residues 58–80 (HLEK…ERPP) and 136–162 (QRKD…EASQ).

In terms of assembly, interacts with PRKACA and RELA. Expressed at high levels in adult heart and at lower levels in brain, testis, ovary and skeletal muscle. Up-regulated in some breast cancer cell lines. Isoform 1 and isoform 3 are expressed in fetal brain.

The protein localises to the nucleus. Functionally, enhances NF-kappa-B transcriptional activity by regulating the nuclear localization of the NF-kappa-B subunit RELA and promoting the phosphorylation of RELA by PRKACA. Regulates the effect of the cAMP-dependent protein kinase signaling pathway on the NF-kappa-B activation cascade. This chain is A-kinase-interacting protein 1 (AKIP1), found in Homo sapiens (Human).